We begin with the raw amino-acid sequence, 68 residues long: Prokaryotic ubiquitin-like protein Pup (68 aa).

The segment at 1-37 (MAQERIFGTGSRREDEPDTPAPVDPPVSGAAQAQRDM) is disordered. Positions 24 to 62 (DPPVSGAAQAQRDMQGTDDLLAEIDGVLETNAEAFVKGF) are ARC ATPase binding. At Gln68 the chain carries Deamidated glutamine. Gln68 is covalently cross-linked (Isoglutamyl lysine isopeptide (Gln-Lys) (interchain with K-? in acceptor proteins)).

Belongs to the prokaryotic ubiquitin-like protein family. Strongly interacts with the proteasome-associated ATPase ARC through a hydrophobic interface; the interacting region of Pup lies in its C-terminal half. There is one Pup binding site per ARC hexamer ring. In terms of processing, is modified by deamidation of its C-terminal glutamine to glutamate by the deamidase Dop, a prerequisite to the subsequent pupylation process.

The protein operates within protein degradation; proteasomal Pup-dependent pathway. In terms of biological role, protein modifier that is covalently attached to lysine residues of substrate proteins, thereby targeting them for proteasomal degradation. The tagging system is termed pupylation. This Kocuria rhizophila (strain ATCC 9341 / DSM 348 / NBRC 103217 / DC2201) protein is Prokaryotic ubiquitin-like protein Pup.